A 465-amino-acid chain; its full sequence is Sodium-dependent phosphate transport protein 1 (465 aa).

3 N-linked (GlcNAc...) asparagine glycosylation sites follow: asparagine 39, asparagine 47, and asparagine 56. 10 helical membrane-spanning segments follow: residues 79 to 99 (GLIL…VGYL), 117 to 137 (SLMS…VIVC), 176 to 196 (FVMG…LLGW), 199 to 219 (VFYI…FLFF), 260 to 280 (LPLW…SLLV), 304 to 324 (LPYL…DFFL), 337 to 356 (LFTT…LLYL), 363 to 383 (TVIF…GQLI), 399 to 419 (VTAL…GLIL), and 429 to 449 (KIFF…FLFA).

Belongs to the major facilitator superfamily. Sodium/anion cotransporter family. In terms of assembly, interacts with PDZK1. As to expression, kidney.

It localises to the apical cell membrane. The enzyme catalyses 3 Na(+)(out) + phosphate(out) = 3 Na(+)(in) + phosphate(in). The catalysed reaction is urate(out) = urate(in). Important for the resorption of phosphate by the kidney. May be involved in actively transporting phosphate into cells via Na(+) cotransport in the renal brush border membrane. Plays a role in urate transport in the kidney. The chain is Sodium-dependent phosphate transport protein 1 (Slc17a1) from Mus musculus (Mouse).